Reading from the N-terminus, the 445-residue chain is Guanosine nucleotide diphosphate dissociation inhibitor At5g09550 (445 aa).

The protein belongs to the Rab GDI family.

In terms of biological role, regulates the GDP/GTP exchange reaction of most RAB proteins by inhibiting the dissociation of GDP from them, and the subsequent binding of GTP. The chain is Guanosine nucleotide diphosphate dissociation inhibitor At5g09550 from Arabidopsis thaliana (Mouse-ear cress).